The chain runs to 110 residues: Nucleoid-associated protein YE3092 (110 aa).

Belongs to the YbaB/EbfC family. Homodimer.

It localises to the cytoplasm. It is found in the nucleoid. Its function is as follows. Binds to DNA and alters its conformation. May be involved in regulation of gene expression, nucleoid organization and DNA protection. The protein is Nucleoid-associated protein YE3092 of Yersinia enterocolitica serotype O:8 / biotype 1B (strain NCTC 13174 / 8081).